We begin with the raw amino-acid sequence, 464 residues long: Agamous-like MADS-box protein AGL92 (464 aa).

Residues 1–60 (MRTKTKLVLIPDRHFRRATFRKRNAGIRKKLHELTTLCDIKACAVIYSPFENPTVWPSTE) enclose the MADS-box domain. The stretch at 85–114 (ETFLRDQITKEQNKLESLRRENRETQLKHF) forms a coiled coil. Positions 443–464 (TSTGHMPSTTTTTTNNNNNNNV) are disordered. The segment covering 451–464 (TTTTTTNNNNNNNV) has biased composition (low complexity).

Interacts with AGL62.

It is found in the nucleus. Functionally, putative transcription factor. The polypeptide is Agamous-like MADS-box protein AGL92 (AGL92) (Arabidopsis thaliana (Mouse-ear cress)).